A 167-amino-acid chain; its full sequence is UPF0303 protein mlr5144 (167 aa).

The protein belongs to the UPF0303 family.

The protein is UPF0303 protein mlr5144 of Mesorhizobium japonicum (strain LMG 29417 / CECT 9101 / MAFF 303099) (Mesorhizobium loti (strain MAFF 303099)).